The chain runs to 365 residues: UPF0718 protein MJ0584 (365 aa).

11 helical membrane-spanning segments follow: residues 6–26 (MSFI…YLNV), 32–52 (LLMA…NFII), 67–87 (VAAV…PLFA), 108–128 (AINV…IGFL), 130–150 (AVFA…IFKS), 174–194 (ITFF…PKLF), 201–221 (LYDG…ILAV), 245–265 (IVFP…AIIP), 282–302 (FIAS…VPII), 308–328 (LGMG…LSIP), and 344–364 (TYLG…GIIL).

This sequence belongs to the UPF0718 family.

The protein resides in the cell membrane. The protein is UPF0718 protein MJ0584 of Methanocaldococcus jannaschii (strain ATCC 43067 / DSM 2661 / JAL-1 / JCM 10045 / NBRC 100440) (Methanococcus jannaschii).